Here is a 327-residue protein sequence, read N- to C-terminus: Aspartate carbamoyltransferase catalytic subunit (327 aa).

Residues arginine 73 and threonine 74 each coordinate carbamoyl phosphate. Lysine 101 lines the L-aspartate pocket. 3 residues coordinate carbamoyl phosphate: arginine 123, histidine 153, and glutamine 156. L-aspartate-binding residues include arginine 186 and arginine 241. 2 residues coordinate carbamoyl phosphate: glycine 282 and proline 283.

The protein belongs to the aspartate/ornithine carbamoyltransferase superfamily. ATCase family. In terms of assembly, heterododecamer (2C3:3R2) of six catalytic PyrB chains organized as two trimers (C3), and six regulatory PyrI chains organized as three dimers (R2).

It carries out the reaction carbamoyl phosphate + L-aspartate = N-carbamoyl-L-aspartate + phosphate + H(+). Its pathway is pyrimidine metabolism; UMP biosynthesis via de novo pathway; (S)-dihydroorotate from bicarbonate: step 2/3. Catalyzes the condensation of carbamoyl phosphate and aspartate to form carbamoyl aspartate and inorganic phosphate, the committed step in the de novo pyrimidine nucleotide biosynthesis pathway. This chain is Aspartate carbamoyltransferase catalytic subunit, found in Acidithiobacillus ferrooxidans (strain ATCC 23270 / DSM 14882 / CIP 104768 / NCIMB 8455) (Ferrobacillus ferrooxidans (strain ATCC 23270)).